We begin with the raw amino-acid sequence, 161 residues long: Allophycocyanin subunit alpha-B (161 aa).

Asn-71 is modified (N4-methylasparagine). Cys-81 contacts (2R,3E)-phycocyanobilin.

Belongs to the phycobiliprotein family. Heterohexamer of two alpha chains, one alpha-B chain and three beta chains. Post-translationally, contains one covalently linked bilin chromophore.

The protein resides in the cellular thylakoid membrane. In terms of biological role, light-harvesting photosynthetic bile pigment-protein from the phycobiliprotein complex. Allophycocyanin has a maximum absorption at approximately 654 nanometers. This chain is Allophycocyanin subunit alpha-B (apcD), found in Synechocystis sp. (strain ATCC 27184 / PCC 6803 / Kazusa).